The following is a 339-amino-acid chain: Ketol-acid reductoisomerase (NADP(+)) (339 aa).

Positions 1-182 (MRVYYDRDAD…GGGRAGIIET (182 aa)) constitute a KARI N-terminal Rossmann domain. Residues 24 to 27 (YGSQ), R48, S51, T53, and 83 to 86 (DELQ) each bind NADP(+). H108 is an active-site residue. G134 contacts NADP(+). Residues 183-328 (SFKEECETDL…AKLRDMMPWI (146 aa)) enclose the KARI C-terminal knotted domain. Mg(2+)-binding residues include D191, E195, E227, and E231. S252 contributes to the substrate binding site.

The protein belongs to the ketol-acid reductoisomerase family. Mg(2+) serves as cofactor.

The enzyme catalyses (2R)-2,3-dihydroxy-3-methylbutanoate + NADP(+) = (2S)-2-acetolactate + NADPH + H(+). It carries out the reaction (2R,3R)-2,3-dihydroxy-3-methylpentanoate + NADP(+) = (S)-2-ethyl-2-hydroxy-3-oxobutanoate + NADPH + H(+). Its pathway is amino-acid biosynthesis; L-isoleucine biosynthesis; L-isoleucine from 2-oxobutanoate: step 2/4. It functions in the pathway amino-acid biosynthesis; L-valine biosynthesis; L-valine from pyruvate: step 2/4. Involved in the biosynthesis of branched-chain amino acids (BCAA). Catalyzes an alkyl-migration followed by a ketol-acid reduction of (S)-2-acetolactate (S2AL) to yield (R)-2,3-dihydroxy-isovalerate. In the isomerase reaction, S2AL is rearranged via a Mg-dependent methyl migration to produce 3-hydroxy-3-methyl-2-ketobutyrate (HMKB). In the reductase reaction, this 2-ketoacid undergoes a metal-dependent reduction by NADPH to yield (R)-2,3-dihydroxy-isovalerate. The protein is Ketol-acid reductoisomerase (NADP(+)) of Rhodopseudomonas palustris (strain HaA2).